A 686-amino-acid polypeptide reads, in one-letter code: Calponin homology and LIM domain-containing protein (686 aa).

In terms of domain architecture, Calponin-homology (CH) spans 15-120 (ELALDESRDW…ITLYWLGRAA (106 aa)). 2 LIM zinc-binding domains span residues 139-200 (MNCS…ATNL) and 219-279 (NKCS…SCGK). The segment covering 305–314 (KQVMDKDGHD) has biased composition (basic and acidic residues). Residues 305–345 (KQVMDKDGHDHHHHNHNKPTTTTTTTNSNSPLAKKKSDSCK) form a disordered region. The segment covering 322 to 333 (KPTTTTTTTNSN) has biased composition (low complexity). LIM zinc-binding domains are found at residues 373–435 (GTCG…NNKS), 437–495 (KNCH…LNQY), 519–579 (DRCV…IQQS), and 583–658 (DHCA…ASSS).

In terms of assembly, interacts with limF and rab21.

In terms of biological role, involved in the regulation of phagocytosis. May repress rab21. The chain is Calponin homology and LIM domain-containing protein (ChLim) from Dictyostelium discoideum (Social amoeba).